A 204-amino-acid chain; its full sequence is Holliday junction branch migration complex subunit RuvA (204 aa).

The interval 1–64 is domain I; sequence MIAQIRGKLI…QDSILLVGFC (64 aa). Residues 65 to 143 form a domain II region; that stretch reads TENEKQLFKL…GWTSKEQITF (79 aa). Residues 144 to 154 form a flexible linker region; that stretch reads INNKKDAIDQS. Residues 154–204 form a domain III region; the sequence is SVMEEDAISALINLGYKSQAAKDAIDRVISEGGENKSLDVILKKALKVLAM.

It belongs to the RuvA family. Homotetramer. Forms an RuvA(8)-RuvB(12)-Holliday junction (HJ) complex. HJ DNA is sandwiched between 2 RuvA tetramers; dsDNA enters through RuvA and exits via RuvB. An RuvB hexamer assembles on each DNA strand where it exits the tetramer. Each RuvB hexamer is contacted by two RuvA subunits (via domain III) on 2 adjacent RuvB subunits; this complex drives branch migration. In the full resolvosome a probable DNA-RuvA(4)-RuvB(12)-RuvC(2) complex forms which resolves the HJ.

The protein resides in the cytoplasm. The RuvA-RuvB-RuvC complex processes Holliday junction (HJ) DNA during genetic recombination and DNA repair, while the RuvA-RuvB complex plays an important role in the rescue of blocked DNA replication forks via replication fork reversal (RFR). RuvA specifically binds to HJ cruciform DNA, conferring on it an open structure. The RuvB hexamer acts as an ATP-dependent pump, pulling dsDNA into and through the RuvAB complex. HJ branch migration allows RuvC to scan DNA until it finds its consensus sequence, where it cleaves and resolves the cruciform DNA. The polypeptide is Holliday junction branch migration complex subunit RuvA (Syntrophus aciditrophicus (strain SB)).